A 265-amino-acid polypeptide reads, in one-letter code: MKIAIAGASGRMGRMLIEAVLAAPDATLAGALDRTGSPQLGQDAGAFLGKQTGVALTDDIERVCAEADYLIDFTRPEGTLAHLDAALRHDVKLVIGTTGFSEPQKAQLRAAGGKIALVFSANMSVGVNVTMKLLEFAAKQFAQGYDIEIIEAHHRHKVDAPSGTALMMGETIAAATGRTLDDCAVYGRHGVTGERDPSTIGFSAIRGGDIVGDHTVLFAGIGERIEITHKSASRVSYAQGALRAARFLAGHQAGFFDMQDVLGLR.

Residues 7–12 (GASGRM) and D33 contribute to the NAD(+) site. NADP(+) is bound at residue R34. NAD(+) contacts are provided by residues 96–98 (GTT) and 120–123 (SANM). Catalysis depends on H153, which acts as the Proton donor/acceptor. Residue H154 coordinates (S)-2,3,4,5-tetrahydrodipicolinate. Residue K157 is the Proton donor of the active site. Position 163–164 (163–164 (GT)) interacts with (S)-2,3,4,5-tetrahydrodipicolinate.

Belongs to the DapB family.

It is found in the cytoplasm. It catalyses the reaction (S)-2,3,4,5-tetrahydrodipicolinate + NAD(+) + H2O = (2S,4S)-4-hydroxy-2,3,4,5-tetrahydrodipicolinate + NADH + H(+). The enzyme catalyses (S)-2,3,4,5-tetrahydrodipicolinate + NADP(+) + H2O = (2S,4S)-4-hydroxy-2,3,4,5-tetrahydrodipicolinate + NADPH + H(+). Its pathway is amino-acid biosynthesis; L-lysine biosynthesis via DAP pathway; (S)-tetrahydrodipicolinate from L-aspartate: step 4/4. Catalyzes the conversion of 4-hydroxy-tetrahydrodipicolinate (HTPA) to tetrahydrodipicolinate. The protein is 4-hydroxy-tetrahydrodipicolinate reductase of Burkholderia pseudomallei (strain 1106a).